The following is a 361-amino-acid chain: Protein-L-isoaspartate O-methyltransferase domain-containing protein 2 (361 aa).

Glycine 2 carries the N-myristoyl glycine lipid modification. The active site involves serine 64. 3 adoMet binding motif regions span residues 85–94 (LNLGSGTGYL), 160–164 (YDRVY), and 181–191 (LKVGGILVMPL). The segment at 240 to 250 (VRSLQDLARIA) is BC-box. The interval 303 to 336 (SNPSDDNSCEDLEEERREEEEKTPPETKPDPPVN) is disordered. The segment covering 309 to 320 (NSCEDLEEERRE) has biased composition (acidic residues). The segment covering 321–331 (EEEKTPPETKP) has biased composition (basic and acidic residues). A CUL-box region spans residues 345 to 348 (LPLP).

Belongs to the methyltransferase superfamily. L-isoaspartyl/D-aspartyl protein methyltransferase family.

Its subcellular location is the cytoplasm. May act as a substrate recognition component of an ECS (Elongin BC-CUL5-SOCS-box protein) E3 ubiquitin ligase complex which mediates the ubiquitination and subsequent proteasomal degradation of target proteins. May bind to the methyltransferase cofactor S-adenosylmethionine (AdoMet) via the N-terminal AdoMet binding motif, but probably does not display methyltransferase activity. This Homo sapiens (Human) protein is Protein-L-isoaspartate O-methyltransferase domain-containing protein 2 (PCMTD2).